We begin with the raw amino-acid sequence, 302 residues long: Ubiquitin thioesterase OTU1 (302 aa).

Residues 5–83 (RCKARSGTQP…IVEEDTSKPS (79 aa)) are UBX-like. Residues 103-228 (LARRVVPADN…GIHYDPLERK (126 aa)) form the OTU domain. The cys-loop stretch occupies residues 108 to 114 (VPADNSC). Residue D111 is part of the active site. Residue C114 is the Nucleophile of the active site. Residues 167–177 (IRREETWGGAI) are variable-loop. The segment at 217 to 221 (YDGIH) is his-loop. I220 is a binding site for substrate. H221 is a catalytic residue. The tract at residues 245–250 (DVVLAQ) is S2 site. A C2H2-type zinc finger spans residues 272-296 (LRCMVCQKGLTGQVEAREHAKETGH). Residue H296 is part of the active site.

The protein localises to the cytoplasm. It catalyses the reaction Thiol-dependent hydrolysis of ester, thioester, amide, peptide and isopeptide bonds formed by the C-terminal Gly of ubiquitin (a 76-residue protein attached to proteins as an intracellular targeting signal).. Functionally, hydrolase that can remove conjugated ubiquitin from proteins and participates in endoplasmic reticulum-associated degradation (ERAD) for misfolded lumenal proteins. May act by triming the ubiquitin chain on the associated substrate to facilitate their threading through the VCP/p97 pore. Ubiquitin moieties on substrates may present a steric impediment to the threading process when the substrate is transferred to the VCP pore and threaded through VCP's axial channel. Mediates deubiquitination of 'Lys-27'-, 'Lys-29'- and 'Lys-33'-linked polyubiquitin chains. Also able to hydrolyze 'Lys-11'-linked ubiquitin chains. Cleaves both polyubiquitin and di-ubiquitin. This is Ubiquitin thioesterase OTU1 (YOD1) from Gallus gallus (Chicken).